Here is a 251-residue protein sequence, read N- to C-terminus: Aspartate/glutamate leucyltransferase (251 aa).

This sequence belongs to the R-transferase family. Bpt subfamily.

It is found in the cytoplasm. It catalyses the reaction N-terminal L-glutamyl-[protein] + L-leucyl-tRNA(Leu) = N-terminal L-leucyl-L-glutamyl-[protein] + tRNA(Leu) + H(+). The catalysed reaction is N-terminal L-aspartyl-[protein] + L-leucyl-tRNA(Leu) = N-terminal L-leucyl-L-aspartyl-[protein] + tRNA(Leu) + H(+). Functionally, functions in the N-end rule pathway of protein degradation where it conjugates Leu from its aminoacyl-tRNA to the N-termini of proteins containing an N-terminal aspartate or glutamate. This Stenotrophomonas maltophilia (strain K279a) protein is Aspartate/glutamate leucyltransferase.